The sequence spans 267 residues: Undecaprenyl-diphosphatase (267 aa).

A run of 8 helical transmembrane segments spans residues 1-21 (MTYF…FLPI), 39-59 (QGLA…VMYF), 87-107 (WLII…KDFI), 111-131 (LRSA…LWWV), 149-169 (ALFL…RSGI), 189-209 (FLMS…KLAL), 218-238 (FLGT…HFFL), and 246-266 (MTPF…WLAL).

The protein belongs to the UppP family.

The protein localises to the cell inner membrane. The enzyme catalyses di-trans,octa-cis-undecaprenyl diphosphate + H2O = di-trans,octa-cis-undecaprenyl phosphate + phosphate + H(+). Catalyzes the dephosphorylation of undecaprenyl diphosphate (UPP). Confers resistance to bacitracin. The protein is Undecaprenyl-diphosphatase of Aliivibrio salmonicida (strain LFI1238) (Vibrio salmonicida (strain LFI1238)).